Here is a 375-residue protein sequence, read N- to C-terminus: Queuine tRNA-ribosyltransferase (375 aa).

Catalysis depends on aspartate 94, which acts as the Proton acceptor. Substrate-binding positions include 94–98 (DSGGF), aspartate 148, glutamine 191, and glycine 218. Residues 249 to 255 (GVGSPDD) form an RNA binding region. Aspartate 268 acts as the Nucleophile in catalysis. Residues 273–277 (TRIAR) form an RNA binding; important for wobble base 34 recognition region. The Zn(2+) site is built by cysteine 306, cysteine 308, cysteine 311, and histidine 337.

It belongs to the queuine tRNA-ribosyltransferase family. In terms of assembly, homodimer. Within each dimer, one monomer is responsible for RNA recognition and catalysis, while the other monomer binds to the replacement base PreQ1. It depends on Zn(2+) as a cofactor.

The catalysed reaction is 7-aminomethyl-7-carbaguanine + guanosine(34) in tRNA = 7-aminomethyl-7-carbaguanosine(34) in tRNA + guanine. Its pathway is tRNA modification; tRNA-queuosine biosynthesis. Its function is as follows. Catalyzes the base-exchange of a guanine (G) residue with the queuine precursor 7-aminomethyl-7-deazaguanine (PreQ1) at position 34 (anticodon wobble position) in tRNAs with GU(N) anticodons (tRNA-Asp, -Asn, -His and -Tyr). Catalysis occurs through a double-displacement mechanism. The nucleophile active site attacks the C1' of nucleotide 34 to detach the guanine base from the RNA, forming a covalent enzyme-RNA intermediate. The proton acceptor active site deprotonates the incoming PreQ1, allowing a nucleophilic attack on the C1' of the ribose to form the product. After dissociation, two additional enzymatic reactions on the tRNA convert PreQ1 to queuine (Q), resulting in the hypermodified nucleoside queuosine (7-(((4,5-cis-dihydroxy-2-cyclopenten-1-yl)amino)methyl)-7-deazaguanosine). The protein is Queuine tRNA-ribosyltransferase of Thermoanaerobacter sp. (strain X514).